The sequence spans 198 residues: Nucleoid occlusion factor SlmA (198 aa).

In terms of domain architecture, HTH tetR-type spans 10–70; sequence NRREEILQSL…SLIEFIEDSL (61 aa). Positions 33–52 form a DNA-binding region, H-T-H motif; it reads TTAKLAASVGVSEAALYRHF. Positions 117 to 144 form a coiled coil; the sequence is EQDRLQGRINQLFERIEAQLRQVLREKR.

This sequence belongs to the nucleoid occlusion factor SlmA family. As to quaternary structure, homodimer. Interacts with FtsZ.

It is found in the cytoplasm. The protein localises to the nucleoid. In terms of biological role, required for nucleoid occlusion (NO) phenomenon, which prevents Z-ring formation and cell division over the nucleoid. Acts as a DNA-associated cell division inhibitor that binds simultaneously chromosomal DNA and FtsZ, and disrupts the assembly of FtsZ polymers. SlmA-DNA-binding sequences (SBS) are dispersed on non-Ter regions of the chromosome, preventing FtsZ polymerization at these regions. In Escherichia coli O45:K1 (strain S88 / ExPEC), this protein is Nucleoid occlusion factor SlmA.